Consider the following 396-residue polypeptide: Elongation factor Tu (396 aa).

Residues 10-206 (KLHVNVGTIG…ALDTHIPNPE (197 aa)) enclose the tr-type G domain. The interval 19–26 (GHVDHGKT) is G1. 19 to 26 (GHVDHGKT) lines the GTP pocket. A Mg(2+)-binding site is contributed by Thr26. Positions 60-64 (GITIS) are G2. Residues 81–84 (DCPG) are G3. Residues 81-85 (DCPGH) and 136-139 (NKAD) contribute to the GTP site. Residues 136-139 (NKAD) form a G4 region. The tract at residues 174 to 176 (SAL) is G5.

It belongs to the TRAFAC class translation factor GTPase superfamily. Classic translation factor GTPase family. EF-Tu/EF-1A subfamily. In terms of assembly, monomer.

It is found in the cytoplasm. The enzyme catalyses GTP + H2O = GDP + phosphate + H(+). In terms of biological role, GTP hydrolase that promotes the GTP-dependent binding of aminoacyl-tRNA to the A-site of ribosomes during protein biosynthesis. This is Elongation factor Tu from Xylella fastidiosa (strain Temecula1 / ATCC 700964).